Here is a 397-residue protein sequence, read N- to C-terminus: Acetate kinase 2 (397 aa).

Mg(2+) is bound at residue asparagine 10. Residue lysine 17 participates in ATP binding. Arginine 90 serves as a coordination point for substrate. Aspartate 147 functions as the Proton donor/acceptor in the catalytic mechanism. Residues 207-211 (HLGNG), 281-283 (DAR), and 329-333 (GIGEN) contribute to the ATP site. Glutamate 385 is a binding site for Mg(2+).

Belongs to the acetokinase family. Homodimer. Mg(2+) serves as cofactor. It depends on Mn(2+) as a cofactor.

Its subcellular location is the cytoplasm. It catalyses the reaction acetate + ATP = acetyl phosphate + ADP. Its pathway is metabolic intermediate biosynthesis; acetyl-CoA biosynthesis; acetyl-CoA from acetate: step 1/2. Catalyzes the formation of acetyl phosphate from acetate and ATP. Can also catalyze the reverse reaction. The protein is Acetate kinase 2 of Vibrio vulnificus (strain CMCP6).